Reading from the N-terminus, the 1127-residue chain is Genome polyprotein (1127 aa).

The tract at residues 1-15 (MNNQRKKARSTPFNM) is interaction with host EXOC1. Residues 1–101 (MNNQRKKARS…LNILNRRRRT (101 aa)) are Cytoplasmic-facing. The interval 37–72 (MLQGRGPLKLFMALVALPRFLTIPPTAGILKRWGTI) is hydrophobic; homodimerization of capsid protein C. Positions 101–114 (TAGVIIMLIPTVMA) are cleaved as a propeptide — ER anchor for the capsid protein C, removed in mature form by serine protease NS3. The helical transmembrane segment at 102 to 122 (AGVIIMLIPTVMAFHLTTRNG) threads the bilayer. Residues 123 to 238 (EPHMIVSRQE…GAWKRACRME (116 aa)) are Extracellular-facing. Asparagine 183 is a glycosylation site (N-linked (GlcNAc...) asparagine; by host). A helical membrane pass occupies residues 239–259 (TWILRHPGFTIMAAILAYTIG). Over 260 to 265 (TTHFQR) the chain is Cytoplasmic. Residues 266-280 (GLILILQTAVAPSMT) traverse the membrane as a helical segment. The Extracellular segment spans residues 281–725 (MRCIGISNRD…LHQVFGAIYG (445 aa)). Intrachain disulfides connect cysteine 283-cysteine 310, cysteine 340-cysteine 401, cysteine 354-cysteine 385, and cysteine 372-cysteine 396. An N-linked (GlcNAc...) asparagine; by host glycan is attached at asparagine 347. Residues 378 to 391 (DRGWGNGCGLFGKG) are fusion peptide. Asparagine 433 carries an N-linked (GlcNAc...) asparagine; by host glycan. Disulfide bonds link cysteine 465-cysteine 565 and cysteine 582-cysteine 613. A helical transmembrane segment spans residues 726–746 (AAFSGVSWTMKILIGVIITWI). At 747–754 (GMNSRSTS) the chain is on the cytoplasmic side. Residues 755–773 (LSVSLVLVGVITLYLGAMV) traverse the membrane as a helical segment. Over 774–1127 (QADSGCVVSW…ENLVTSLVTA (354 aa)) the chain is Extracellular. Cystine bridges form between cysteine 779–cysteine 790, cysteine 830–cysteine 918, cysteine 954–cysteine 998, cysteine 1055–cysteine 1104, and cysteine 1066–cysteine 1088. Asparagine 905 and asparagine 982 each carry an N-linked (GlcNAc...) asparagine; by host glycan.

Homodimer. Interacts (via N-terminus) with host EXOC1 (via C-terminus); this interaction results in EXOC1 degradation through the proteasome degradation pathway. In terms of assembly, forms heterodimers with envelope protein E in the endoplasmic reticulum and Golgi. As to quaternary structure, homodimer; in the endoplasmic reticulum and Golgi. Interacts with protein prM. Interacts with non-structural protein 1. Homodimer; Homohexamer when secreted. Interacts with envelope protein E. Post-translationally, specific enzymatic cleavages in vivo yield mature proteins. Cleavages in the lumen of endoplasmic reticulum are performed by host signal peptidase, wereas cleavages in the cytoplasmic side are performed by the Serine protease NS3. Signal cleavage at the 2K-4B site requires a prior NS3 protease-mediated cleavage at the 4A-2K site. Cleaved in post-Golgi vesicles by a host furin, releasing the mature small envelope protein M, and peptide pr. This cleavage is incomplete as up to 30% of viral particles still carry uncleaved prM. In terms of processing, N-glycosylated. Post-translationally, N-glycosylated. The excreted form is glycosylated and this is required for efficient secretion of the protein from infected cells.

It is found in the virion. The protein localises to the host nucleus. The protein resides in the host cytoplasm. Its subcellular location is the host perinuclear region. It localises to the secreted. It is found in the virion membrane. The protein localises to the host endoplasmic reticulum membrane. In terms of biological role, plays a role in virus budding by binding to the cell membrane and gathering the viral RNA into a nucleocapsid that forms the core of a mature virus particle. During virus entry, may induce genome penetration into the host cytoplasm after hemifusion induced by the surface proteins. Can migrate to the cell nucleus where it modulates host functions. Overcomes the anti-viral effects of host EXOC1 by sequestering and degrading the latter through the proteasome degradation pathway. Functionally, inhibits RNA silencing by interfering with host Dicer. Prevents premature fusion activity of envelope proteins in trans-Golgi by binding to envelope protein E at pH6.0. After virion release in extracellular space, gets dissociated from E dimers. Its function is as follows. Acts as a chaperone for envelope protein E during intracellular virion assembly by masking and inactivating envelope protein E fusion peptide. prM is the only viral peptide matured by host furin in the trans-Golgi network probably to avoid catastrophic activation of the viral fusion activity in acidic GolGi compartment prior to virion release. prM-E cleavage is inefficient, and many virions are only partially matured. These uncleaved prM would play a role in immune evasion. In terms of biological role, may play a role in virus budding. Exerts cytotoxic effects by activating a mitochondrial apoptotic pathway through M ectodomain. May display a viroporin activity. Functionally, binds to host cell surface receptor and mediates fusion between viral and cellular membranes. Envelope protein is synthesized in the endoplasmic reticulum in the form of heterodimer with protein prM. They play a role in virion budding in the ER, and the newly formed immature particle is covered with 60 spikes composed of heterodimer between precursor prM and envelope protein E. The virion is transported to the Golgi apparatus where the low pH causes dissociation of PrM-E heterodimers and formation of E homodimers. prM-E cleavage is inefficient, and many virions are only partially matured. These uncleaved prM would play a role in immune evasion. Involved in immune evasion, pathogenesis and viral replication. Once cleaved off the polyprotein, is targeted to three destinations: the viral replication cycle, the plasma membrane and the extracellular compartment. Essential for viral replication. Required for formation of the replication complex and recruitment of other non-structural proteins to the ER-derived membrane structures. Excreted as a hexameric lipoparticle that plays a role against host immune response. Antagonizing the complement function. Binds to the host macrophages and dendritic cells. Inhibits signal transduction originating from Toll-like receptor 3 (TLR3). Its function is as follows. Disrupts the host endothelial glycocalyx layer of host pulmonary microvascular endothelial cells, inducing degradation of sialic acid and shedding of heparan sulfate proteoglycans. NS1 induces expression of sialidases, heparanase, and activates cathepsin L, which activates heparanase via enzymatic cleavage. These effects are probably linked to the endothelial hyperpermeability observed in severe dengue disease. The sequence is that of Genome polyprotein from Dengue virus type 2 (strain China/D2-04) (DENV-2).